The following is a 209-amino-acid chain: Ribosomal RNA large subunit methyltransferase E (209 aa).

S-adenosyl-L-methionine-binding residues include Gly63, Trp65, Asp83, Asp99, and Asp124. The active-site Proton acceptor is Lys164.

This sequence belongs to the class I-like SAM-binding methyltransferase superfamily. RNA methyltransferase RlmE family.

Its subcellular location is the cytoplasm. It catalyses the reaction uridine(2552) in 23S rRNA + S-adenosyl-L-methionine = 2'-O-methyluridine(2552) in 23S rRNA + S-adenosyl-L-homocysteine + H(+). In terms of biological role, specifically methylates the uridine in position 2552 of 23S rRNA at the 2'-O position of the ribose in the fully assembled 50S ribosomal subunit. The sequence is that of Ribosomal RNA large subunit methyltransferase E from Vibrio campbellii (strain ATCC BAA-1116).